The chain runs to 110 residues: Cytochrome c (110 aa).

Residues Cys-21, Cys-24, His-25, and Met-87 each coordinate heme c.

The protein belongs to the cytochrome c family. Post-translationally, binds 1 heme c group covalently per subunit.

It localises to the mitochondrion intermembrane space. Its function is as follows. Electron carrier protein. The oxidized form of the cytochrome c heme group can accept an electron from the heme group of the cytochrome c1 subunit of cytochrome reductase. Cytochrome c then transfers this electron to the cytochrome oxidase complex, the final protein carrier in the mitochondrial electron-transport chain. The sequence is that of Cytochrome c (CYCK) from Kluyveromyces lactis (strain ATCC 8585 / CBS 2359 / DSM 70799 / NBRC 1267 / NRRL Y-1140 / WM37) (Yeast).